A 449-amino-acid chain; its full sequence is Trigger factor (449 aa).

The region spanning 172-257 (GDEVRFDFKG…IKEITNVKPQ (86 aa)) is the PPIase FKBP-type domain.

Belongs to the FKBP-type PPIase family. Tig subfamily.

It is found in the cytoplasm. The catalysed reaction is [protein]-peptidylproline (omega=180) = [protein]-peptidylproline (omega=0). Involved in protein export. Acts as a chaperone by maintaining the newly synthesized protein in an open conformation. Functions as a peptidyl-prolyl cis-trans isomerase. This chain is Trigger factor, found in Ureaplasma parvum serovar 3 (strain ATCC 27815 / 27 / NCTC 11736).